Here is a 923-residue protein sequence, read N- to C-terminus: Isoleucine--tRNA ligase (923 aa).

The 'HIGH' region signature appears at 57–67; the sequence is PYANGDIHIGT. Glu561 provides a ligand contact to L-isoleucyl-5'-AMP. Positions 602 to 606 match the 'KMSKS' region motif; sequence AMHKS. Lys605 serves as a coordination point for ATP. 4 residues coordinate Zn(2+): Cys895, Cys898, Cys915, and Cys918.

This sequence belongs to the class-I aminoacyl-tRNA synthetase family. IleS type 1 subfamily. In terms of assembly, monomer. Requires Zn(2+) as cofactor.

Its subcellular location is the cytoplasm. It carries out the reaction tRNA(Ile) + L-isoleucine + ATP = L-isoleucyl-tRNA(Ile) + AMP + diphosphate. Its function is as follows. Catalyzes the attachment of isoleucine to tRNA(Ile). As IleRS can inadvertently accommodate and process structurally similar amino acids such as valine, to avoid such errors it has two additional distinct tRNA(Ile)-dependent editing activities. One activity is designated as 'pretransfer' editing and involves the hydrolysis of activated Val-AMP. The other activity is designated 'posttransfer' editing and involves deacylation of mischarged Val-tRNA(Ile). The protein is Isoleucine--tRNA ligase of Brachyspira hyodysenteriae (strain ATCC 49526 / WA1).